The sequence spans 233 residues: UPF0758 protein Rcas_0037 (233 aa).

Residues 107 to 229 form the MPN domain; sequence QIRSPTDAAQ…FVSMRERGLA (123 aa). Positions 178, 180, and 191 each coordinate Zn(2+). The short motif at 178–191 is the JAMM motif element; the sequence is HNHPSGDPTPSPED.

The protein belongs to the UPF0758 family.

This is UPF0758 protein Rcas_0037 from Roseiflexus castenholzii (strain DSM 13941 / HLO8).